We begin with the raw amino-acid sequence, 449 residues long: Mannan endo-1,6-alpha-mannosidase DCW1 (449 aa).

The signal sequence occupies residues 1-21; that stretch reads MLVNKVIGLLGVLFATRFTNA. N-linked (GlcNAc...) asparagine glycosylation is found at Asn-34, Asn-84, Asn-109, Asn-133, Asn-203, Asn-225, Asn-240, Asn-265, Asn-281, Asn-337, Asn-362, and Asn-420. Gly-428 carries GPI-anchor amidated glycine lipidation. Residues 429-449 constitute a propeptide, removed in mature form; the sequence is AGIITAVIGISIVACALWLVF.

The protein belongs to the glycosyl hydrolase 76 family.

It localises to the cell membrane. It carries out the reaction Random hydrolysis of (1-&gt;6)-alpha-D-mannosidic linkages in unbranched (1-&gt;6)-mannans.. Its function is as follows. Required for normal synthesis of the cell wall. The protein is Mannan endo-1,6-alpha-mannosidase DCW1 (DCW1) of Saccharomyces cerevisiae (strain ATCC 204508 / S288c) (Baker's yeast).